Reading from the N-terminus, the 298-residue chain is Protease HtpX homolog (298 aa).

A run of 2 helical transmembrane segments spans residues valine 14–leucine 34 and tyrosine 39–phenylalanine 59. Histidine 143 provides a ligand contact to Zn(2+). Glutamate 144 is an active-site residue. Histidine 147 is a Zn(2+) binding site. The next 2 helical transmembrane spans lie at isoleucine 158–tryptophan 178 and isoleucine 197–isoleucine 217. Glutamate 226 lines the Zn(2+) pocket.

Belongs to the peptidase M48B family. Requires Zn(2+) as cofactor.

The protein localises to the cell membrane. In Streptococcus pyogenes serotype M3 (strain SSI-1), this protein is Protease HtpX homolog.